Reading from the N-terminus, the 485-residue chain is Rop guanine nucleotide exchange factor 2 (485 aa).

The segment at 1–36 (MENLPNHEENDDVGYHQSPGPIDPNDHSASETPVYS) is disordered. A PRONE domain is found at 107–485 (LAVQEISEPE…YVDKTMRGEE (379 aa)).

Interacts with ARC10/ROP11. In terms of tissue distribution, expressed in the vascular tissues of roots, leaves, sepals, petals and siliques.

Guanine-nucleotide exchange factor (GEF) that acts as an activator of Rop (Rho of plants) GTPases by promoting the exchange of GDP for GTP. This is Rop guanine nucleotide exchange factor 2 (ROPGEF2) from Arabidopsis thaliana (Mouse-ear cress).